A 191-amino-acid chain; its full sequence is MDVWKRQRLQECRELCPLPALMSLSNILSNTEIIYVKYLFKMDFSTMYRFILPALTLSMTVTKSVVIEMLFILKRWEEINQFFRLNIRKVNDCFVVAQFTNIPVKRKIIVLLYMLTSRQEKQLFLNMIYAFLEKSHLRLGDDEEQNAIRFFSYVDELHLTRDVLLEIIYKLKNTEINQTMELLLSYNELAG.

The chain crosses the membrane as a helical span at residues 50 to 72 (FILPALTLSMTVTKSVVIEMLFI).

It localises to the host membrane. The polypeptide is Protein U15 (U15) (Homo sapiens (Human)).